Consider the following 473-residue polypeptide: Putative tyrosine recombinase XerC (473 aa).

Residues 4–82 (MTLPELTQEY…HLRTVYRYAM (79 aa)) form the Core-binding (CB) domain. The region spanning 118-305 (RNWLRFLVQE…DYDLMREVMN (188 aa)) is the Tyr recombinase domain. Active-site residues include R156, K183, H256, R259, and H283. Y292 (O-(3'-phospho-DNA)-tyrosine intermediate) is an active-site residue. Over residues 341–352 (SGTELQPATTES) the composition is skewed to polar residues. Positions 341–365 (SGTELQPATTESSEAKKADDTASNP) are disordered.

This sequence belongs to the 'phage' integrase family.

The protein resides in the cytoplasm. Site-specific tyrosine recombinase, which acts by catalyzing the cutting and rejoining of the recombining DNA molecules. The polypeptide is Putative tyrosine recombinase XerC (Pseudomonas syringae).